The sequence spans 360 residues: Phosphate acyltransferase (360 aa).

Residues 296–305 are compositionally biased toward basic and acidic residues; it reads STLRREHLDR. The interval 296 to 360 is disordered; that stretch reads STLRREHLDR…LRTAEPPGSL (65 aa). Basic residues predominate over residues 314–333; that stretch reads PRQRRRPRRQKRRAACRPRP. Low complexity predominate over residues 334 to 350; the sequence is RSAAGRAPGSGVRGAAG.

Belongs to the PlsX family. As to quaternary structure, homodimer. Probably interacts with PlsY.

It is found in the cytoplasm. It carries out the reaction a fatty acyl-[ACP] + phosphate = an acyl phosphate + holo-[ACP]. It functions in the pathway lipid metabolism; phospholipid metabolism. Its function is as follows. Catalyzes the reversible formation of acyl-phosphate (acyl-PO(4)) from acyl-[acyl-carrier-protein] (acyl-ACP). This enzyme utilizes acyl-ACP as fatty acyl donor, but not acyl-CoA. The chain is Phosphate acyltransferase from Deinococcus radiodurans (strain ATCC 13939 / DSM 20539 / JCM 16871 / CCUG 27074 / LMG 4051 / NBRC 15346 / NCIMB 9279 / VKM B-1422 / R1).